A 104-amino-acid chain; its full sequence is Cytochrome c-551 (104 aa).

An N-terminal signal peptide occupies residues Met-1 to Ala-22. Heme c-binding residues include Cys-34, Cys-37, His-38, and Met-83.

Post-translationally, binds 1 heme c group covalently per subunit.

The protein resides in the periplasm. In terms of biological role, electron donor for cytochrome cd1 in nitrite and nitrate respiration. The chain is Cytochrome c-551 (nirM) from Stutzerimonas stutzeri (Pseudomonas stutzeri).